A 286-amino-acid chain; its full sequence is uncharacterized protein (286 aa).

7 helical membrane passes run Leu-30 to Gln-50, Leu-68 to Phe-88, Trp-99 to Leu-119, Ile-136 to Leu-156, Leu-169 to Ile-189, Ile-205 to Val-225, and Ser-254 to Leu-274.

The protein resides in the cell membrane. This is an uncharacterized protein from Mycoplasma genitalium (strain ATCC 33530 / DSM 19775 / NCTC 10195 / G37) (Mycoplasmoides genitalium).